The primary structure comprises 283 residues: Release factor glutamine methyltransferase (283 aa).

2 residues coordinate S-adenosyl-L-methionine: Asp-143 and Asn-189. A substrate-binding site is contributed by Asn-189–Tyr-192.

It belongs to the protein N5-glutamine methyltransferase family. PrmC subfamily.

It catalyses the reaction L-glutaminyl-[peptide chain release factor] + S-adenosyl-L-methionine = N(5)-methyl-L-glutaminyl-[peptide chain release factor] + S-adenosyl-L-homocysteine + H(+). Functionally, methylates the class 1 translation termination release factors RF1/PrfA and RF2/PrfB on the glutamine residue of the universally conserved GGQ motif. In Clostridium botulinum (strain Hall / ATCC 3502 / NCTC 13319 / Type A), this protein is Release factor glutamine methyltransferase.